The primary structure comprises 63 residues: Large ribosomal subunit protein bL28 (63 aa).

This sequence belongs to the bacterial ribosomal protein bL28 family.

The chain is Large ribosomal subunit protein bL28 from Geotalea uraniireducens (strain Rf4) (Geobacter uraniireducens).